The chain runs to 366 residues: 3-isopropylmalate dehydrogenase (366 aa).

Position 78–91 (78–91 (GPKWEDLPSHLQPE)) interacts with NAD(+). Substrate contacts are provided by R99, R109, R138, and D227. Positions 227, 251, and 255 each coordinate Mg(2+). 285–297 (GSAPDIKGKNIAN) contributes to the NAD(+) binding site.

It belongs to the isocitrate and isopropylmalate dehydrogenases family. LeuB type 1 subfamily. In terms of assembly, homodimer. Requires Mg(2+) as cofactor. The cofactor is Mn(2+).

The protein localises to the cytoplasm. It carries out the reaction (2R,3S)-3-isopropylmalate + NAD(+) = 4-methyl-2-oxopentanoate + CO2 + NADH. The protein operates within amino-acid biosynthesis; L-leucine biosynthesis; L-leucine from 3-methyl-2-oxobutanoate: step 3/4. Functionally, catalyzes the oxidation of 3-carboxy-2-hydroxy-4-methylpentanoate (3-isopropylmalate) to 3-carboxy-4-methyl-2-oxopentanoate. The product decarboxylates to 4-methyl-2 oxopentanoate. This Buchnera aphidicola subsp. Baizongia pistaciae (strain Bp) protein is 3-isopropylmalate dehydrogenase.